A 535-amino-acid polypeptide reads, in one-letter code: Formate--tetrahydrofolate ligase (535 aa).

Thr50 to Thr57 lines the ATP pocket.

It belongs to the formate--tetrahydrofolate ligase family.

It catalyses the reaction (6S)-5,6,7,8-tetrahydrofolate + formate + ATP = (6R)-10-formyltetrahydrofolate + ADP + phosphate. It participates in one-carbon metabolism; tetrahydrofolate interconversion. In Picrophilus torridus (strain ATCC 700027 / DSM 9790 / JCM 10055 / NBRC 100828 / KAW 2/3), this protein is Formate--tetrahydrofolate ligase.